Here is a 312-residue protein sequence, read N- to C-terminus: Carbonic anhydrase 4 (312 aa).

Residues 1–18 form the signal peptide; that stretch reads MRMLLALLALSAARPSAS. The Alpha-carbonic anhydrase domain maps to 21-285; it reads SHWCYEVQAE…LGQRTVIKSG (265 aa). Cystine bridges form between C24–C36 and C46–C229. H88 functions as the Proton donor/acceptor in the catalytic mechanism. Zn(2+) is bound by residues H115, H117, and H140. Residue 225–226 participates in substrate binding; the sequence is TT. The GPI-anchor amidated serine moiety is linked to residue S284. Positions 285 to 312 are cleaved as a propeptide — removed in mature form; sequence GAPGRPLPWALPALLGPMLACLLAGFLR.

It belongs to the alpha-carbonic anhydrase family. As to quaternary structure, interacts with SLC4A4. The cofactor is Zn(2+). In terms of tissue distribution, expressed in the endothelium of the choriocapillaris in eyes (at protein level). Not expressed in the retinal epithelium at detectable levels.

Its subcellular location is the cell membrane. It catalyses the reaction hydrogencarbonate + H(+) = CO2 + H2O. With respect to regulation, activated by histamine, L-adrenaline, D-phenylalanine, L- and D-histidine. Inhibited by coumarins, saccharin, sulfonamide derivatives such as acetazolamide and Foscarnet (phosphonoformate trisodium salt). In terms of biological role, catalyzes the reversible hydration of carbon dioxide into bicarbonate and protons and thus is essential to maintaining intracellular and extracellular pH. May stimulate the sodium/bicarbonate transporter activity of SLC4A4 that acts in pH homeostasis. It is essential for acid overload removal from the retina and retina epithelium, and acid release in the choriocapillaris in the choroid. This Homo sapiens (Human) protein is Carbonic anhydrase 4.